A 176-amino-acid chain; its full sequence is ATP synthase subunit b (176 aa).

A helical transmembrane segment spans residues 14 to 34; that stretch reads STTLGTMIVVSGAFLILMLLL.

This sequence belongs to the ATPase B chain family. In terms of assembly, F-type ATPases have 2 components, F(1) - the catalytic core - and F(0) - the membrane proton channel. F(1) has five subunits: alpha(3), beta(3), gamma(1), delta(1), epsilon(1). F(0) has three main subunits: a(1), b(2) and c(10-14). The alpha and beta chains form an alternating ring which encloses part of the gamma chain. F(1) is attached to F(0) by a central stalk formed by the gamma and epsilon chains, while a peripheral stalk is formed by the delta and b chains.

It localises to the cell membrane. F(1)F(0) ATP synthase produces ATP from ADP in the presence of a proton or sodium gradient. F-type ATPases consist of two structural domains, F(1) containing the extramembraneous catalytic core and F(0) containing the membrane proton channel, linked together by a central stalk and a peripheral stalk. During catalysis, ATP synthesis in the catalytic domain of F(1) is coupled via a rotary mechanism of the central stalk subunits to proton translocation. In terms of biological role, component of the F(0) channel, it forms part of the peripheral stalk, linking F(1) to F(0). This is ATP synthase subunit b from Enterococcus faecalis (strain ATCC 700802 / V583).